A 90-amino-acid chain; its full sequence is SSSSSSASRALPAQDPPMEKALSMFSEDFGSFMLPHSEPLTFPARPGGQGNIKTLGDAYEFTVDMRDFSPEDIIVTTSNNHIEVRAEKKP.

Residues 39-90 enclose the sHSP domain; sequence PLTFPARPGGQGNIKTLGDAYEFTVDMRDFSPEDIIVTTSNNHIEVRAEKKP.

Belongs to the small heat shock protein (HSP20) family. Interacts with C-terminal domain of actin-binding protein 280. Found in both cardiac and skeletal muscle.

It localises to the cytoplasm. The protein resides in the nucleus. Its subcellular location is the cajal body. In Rattus norvegicus (Rat), this protein is Heat shock protein beta-7 (Hspb7).